We begin with the raw amino-acid sequence, 314 residues long: Ribosomal protein L11 methyltransferase (314 aa).

The S-adenosyl-L-methionine site is built by Thr152, Gly184, Asp206, and Asn248.

Belongs to the methyltransferase superfamily. PrmA family.

Its subcellular location is the cytoplasm. It catalyses the reaction L-lysyl-[protein] + 3 S-adenosyl-L-methionine = N(6),N(6),N(6)-trimethyl-L-lysyl-[protein] + 3 S-adenosyl-L-homocysteine + 3 H(+). In terms of biological role, methylates ribosomal protein L11. In Geotalea daltonii (strain DSM 22248 / JCM 15807 / FRC-32) (Geobacter daltonii), this protein is Ribosomal protein L11 methyltransferase.